Here is a 410-residue protein sequence, read N- to C-terminus: Sensor histidine kinase GlnK (410 aa).

Residues 1-15 (MLITVPLAGELKFYP) lie on the Extracellular side of the membrane. Residues 16-36 (LNEEFRVSFGAPVFFFFLSLL) traverse the membrane as a helical segment. Residues 37–38 (RH) are Cytoplasmic-facing. A helical membrane pass occupies residues 39–59 (VPAVLPGFLTGAAVFIFRVFL). The Extracellular portion of the chain corresponds to 60–71 (ELWGGGHNGLTP). A helical membrane pass occupies residues 72–92 (ILYDQASGFFFYMTYACLFSI). Topologically, residues 93 to 102 (LKANRFRERP) are cytoplasmic. A helical membrane pass occupies residues 103–123 (IMLGFIGFMIEVVSDCVELTV). Residues 124–139 (QFLIFHTVVTPEKITD) are Extracellular-facing. The helical transmembrane segment at 140-160 (IAVIAISHTFIVMSFYSVLKL) threads the bilayer. Residues 161 to 410 (YETQSREKQT…LPVRHLIQKG (250 aa)) lie on the Cytoplasmic side of the membrane. One can recognise a Histidine kinase domain in the interval 189–405 (VHLKKTLKTT…VFAIRLPVRH (217 aa)). His190 is subject to Phosphohistidine; by autocatalysis.

Homotrimer. Under poor nitrogen source such as nitrate, the complex between GlnK and AmtB, which are the transmembrane ammonium transporter and its cognate regulator, respectively, interacts with TnrA. GlnK-ATP complex are not able to bind TnrA.

It is found in the cell membrane. The enzyme catalyses ATP + protein L-histidine = ADP + protein N-phospho-L-histidine.. Member of the two-component regulatory system GlnK/GlnL that positively regulates the expression of the glsA-glnT operon in response to glutamine. It seems that autophosphorylated GlnK transfers a phosphoryl group to GlnL, which positively regulates the expression of the glsA-glnT operon. Interaction between GlnK-AmtB complex and TnrA protects TnrA from proteolytic degradation. The protein is Sensor histidine kinase GlnK of Bacillus subtilis (strain 168).